A 509-amino-acid polypeptide reads, in one-letter code: Cytochrome P450 monooxygenase aba1 (509 aa).

The signal sequence occupies residues 1 to 31 (MSNSILNLGSFACLLSLGSIVLWYTISAVLA). Residue asparagine 402 is glycosylated (N-linked (GlcNAc...) asparagine). Cysteine 451 serves as a coordination point for heme. Asparagine 462 carries N-linked (GlcNAc...) asparagine glycosylation.

It belongs to the cytochrome P450 family. Heme is required as a cofactor.

The protein operates within hormone biosynthesis. Functionally, cytochrome P450 monooxygenase; part of the gene cluster that mediates the biosynthesis of abscisic acid (ABA), a phytohormone that acts antagonistically toward salicylic acid (SA), jasmonic acid (JA) and ethylene (ETH) signaling, to impede plant defense responses. The first step of the pathway catalyzes the reaction from farnesyl diphosphate to alpha-ionylideneethane performed by the alpha-ionylideneethane synthase aba3 via a three-step reaction mechanism involving 2 neutral intermediates, beta-farnesene and allofarnesene. The cytochrome P450 monooxygenase aba1 might then be involved in the conversion of alpha-ionylideneethane to alpha-ionylideneacetic acid. Alpha-ionylideneacetic acid is further converted to abscisic acid in 2 steps involving the cytochrome P450 monooxygenase aba2 and the short-chain dehydrogenase/reductase aba4, via the intermediates 1'-deoxy-ABA or 1',4'-trans-diol-ABA, depending on the order of action of these 2 enzymes. Aba2 is responsible for the hydroxylation of carbon atom C-1' and aba4 might be involved in the oxidation of the C-4' carbon atom. This is Cytochrome P450 monooxygenase aba1 (aba1) from Botryotinia fuckeliana (strain B05.10) (Noble rot fungus).